Consider the following 252-residue polypeptide: 5'-nucleotidase SurE (252 aa).

Positions 8, 9, 39, and 95 each coordinate a divalent metal cation.

The protein belongs to the SurE nucleotidase family. Requires a divalent metal cation as cofactor.

It localises to the cytoplasm. The enzyme catalyses a ribonucleoside 5'-phosphate + H2O = a ribonucleoside + phosphate. In terms of biological role, nucleotidase that shows phosphatase activity on nucleoside 5'-monophosphates. The sequence is that of 5'-nucleotidase SurE from Clostridium botulinum (strain Kyoto / Type A2).